The chain runs to 377 residues: Stimulator of interferon genes protein (377 aa).

The Cytoplasmic segment spans residues 1–21; sequence MRRAEENNGFGTIPKRRNQHT. Residues 22–42 form a helical membrane-spanning segment; sequence PFYASIGMIVVIIVAFTSYHI. Topologically, residues 43 to 57 are extracellular; sequence TSYGDDRNRAMRQYS. The helical transmembrane segment at 58 to 80 threads the bilayer; that stretch reads FTFSLAYLAFLVGELLRRCCLFA. Topologically, residues 81–101 are cytoplasmic; that stretch reads EEYRHIETRYNGSLKKAIQTT. The helical transmembrane segment at 102–122 threads the bilayer; sequence FSFGHNNVLFVASLLFFVVFV. The Extracellular segment spans residues 123–154; it reads ASNDPNGSSSVIQGNSTAEPHTEMRQTSGWQG. Residues 155–175 form a helical membrane-spanning segment; that stretch reads LWGQFIISALLTPLVVHLLGL. At 176–377 the chain is on the cytoplasmic side; sequence RELSKVEESQ…LKDSELEIGG (202 aa). Residues tyrosine 206, arginine 272, 278–279, and threonine 303 contribute to the 2',3'-cGAMP site; that span reads RH. 3',3'-c-di-GMP is bound by residues tyrosine 206, arginine 272, arginine 278, and 300–303; that span reads EYAT.

It belongs to the TMEM173 family. In terms of assembly, homodimer.

Its subcellular location is the endoplasmic reticulum membrane. Its function is as follows. Sensor of cytosolic DNA from bacteria and viruses that promotes autophagy. Acts by recognizing and binding cyclic GMP-AMP (cGAMP), a messenger produced by CGAS in response to DNA in the cytosol. Following cGAMP-binding, promotes the formation of autophagosomes, leading to target cytosolic DNA for degradation by the lysosome. Exhibits guanine base-specific ligand recognition. Binds 3'-3'linked cGAMP, 2'-3' linked cGAMP and 3'-3' linked c-di-GMP with much greater affinity as compared to 3'-3' linked c-di-AMP. Lacks the C-terminal tail (CTT) found in mammalian orthologs which is essential for interferon signaling. This is Stimulator of interferon genes protein from Nematostella vectensis (Starlet sea anemone).